A 477-amino-acid polypeptide reads, in one-letter code: Aspartyl/glutamyl-tRNA(Asn/Gln) amidotransferase subunit B (477 aa).

Belongs to the GatB/GatE family. GatB subfamily. As to quaternary structure, heterotrimer of A, B and C subunits.

The catalysed reaction is L-glutamyl-tRNA(Gln) + L-glutamine + ATP + H2O = L-glutaminyl-tRNA(Gln) + L-glutamate + ADP + phosphate + H(+). The enzyme catalyses L-aspartyl-tRNA(Asn) + L-glutamine + ATP + H2O = L-asparaginyl-tRNA(Asn) + L-glutamate + ADP + phosphate + 2 H(+). Its function is as follows. Allows the formation of correctly charged Asn-tRNA(Asn) or Gln-tRNA(Gln) through the transamidation of misacylated Asp-tRNA(Asn) or Glu-tRNA(Gln) in organisms which lack either or both of asparaginyl-tRNA or glutaminyl-tRNA synthetases. The reaction takes place in the presence of glutamine and ATP through an activated phospho-Asp-tRNA(Asn) or phospho-Glu-tRNA(Gln). The chain is Aspartyl/glutamyl-tRNA(Asn/Gln) amidotransferase subunit B from Methylobacillus flagellatus (strain ATCC 51484 / DSM 6875 / VKM B-1610 / KT).